Reading from the N-terminus, the 160-residue chain is Cyclic pyranopterin monophosphate synthase (160 aa).

Substrate-binding positions include 77–79 (LCH) and 115–116 (ME). Aspartate 130 is a catalytic residue.

The protein belongs to the MoaC family. Homohexamer; trimer of dimers.

The enzyme catalyses (8S)-3',8-cyclo-7,8-dihydroguanosine 5'-triphosphate = cyclic pyranopterin phosphate + diphosphate. It participates in cofactor biosynthesis; molybdopterin biosynthesis. Functionally, catalyzes the conversion of (8S)-3',8-cyclo-7,8-dihydroguanosine 5'-triphosphate to cyclic pyranopterin monophosphate (cPMP). This chain is Cyclic pyranopterin monophosphate synthase, found in Parvibaculum lavamentivorans (strain DS-1 / DSM 13023 / NCIMB 13966).